The chain runs to 246 residues: 4-aminobenzoate synthase (246 aa).

The Fe(2+) site is built by glutamate 88, histidine 95, glutamate 149, histidine 181, aspartate 185, and histidine 188.

It belongs to the CADD family. In terms of assembly, homodimer. The cofactor is Fe(2+). Requires Mn(2+) as cofactor.

Involved in de novo para-aminobenzoate (PABA) biosynthesis. Acts as a self-sacrificing or 'suicide' enzyme that utilizes its own active site tyrosine residue(s) as the substrate for PABA synthesis. The side chain of the tyrosine residue is released from the protein backbone via cleavage of the C(alpha)-C(beta) bond, leaving a glycine in place of the original tyrosine residue. Reaction requires O(2) and a reduced dimetal cofactor. The sequence is that of 4-aminobenzoate synthase from Nitrosomonas europaea (strain ATCC 19718 / CIP 103999 / KCTC 2705 / NBRC 14298).